The sequence spans 549 residues: Biotin-dependent acetyl-/propionyl-coenzyme A carboxylase beta5 subunit (549 aa).

One can recognise a CoA carboxyltransferase N-terminal domain in the interval 25–281 (TAGKLAELHK…NNFTDAPRYS (257 aa)). Positions 295–542 (AKDLELDTLI…ERKIAHLPPK (248 aa)) constitute a CoA carboxyltransferase C-terminal domain.

This sequence belongs to the AccD/PCCB family. As to quaternary structure, the biotin-dependent acyl-CoA carboxylase complex is composed of AccA3, which contains the biotin carboxylase (BC) and biotin carboxyl carrier protein (BCCP) domains, and AccD5, which contains the carboxyl transferase (CT) domain.

The catalysed reaction is N(6)-carboxybiotinyl-L-lysyl-[protein] + acetyl-CoA = N(6)-biotinyl-L-lysyl-[protein] + malonyl-CoA. It catalyses the reaction N(6)-carboxybiotinyl-L-lysyl-[protein] + propanoyl-CoA = methylmalonyl-CoA + N(6)-biotinyl-L-lysyl-[protein]. It participates in lipid metabolism; mycolic acid biosynthesis. In terms of biological role, component of a biotin-dependent acyl-CoA carboxylase complex. This subunit transfers the CO2 from carboxybiotin to the CoA ester substrate. When associated with the alpha3 subunit AccA3, is involved in the carboxylation of acetyl-CoA and propionyl-CoA. In Mycobacterium leprae (strain TN), this protein is Biotin-dependent acetyl-/propionyl-coenzyme A carboxylase beta5 subunit (accD5).